A 271-amino-acid polypeptide reads, in one-letter code: Putative phosphoenolpyruvate synthase regulatory protein (271 aa).

151–158 (GVSRSGKT) contributes to the ADP binding site.

The protein belongs to the pyruvate, phosphate/water dikinase regulatory protein family. PSRP subfamily.

It catalyses the reaction [pyruvate, water dikinase] + ADP = [pyruvate, water dikinase]-phosphate + AMP + H(+). The catalysed reaction is [pyruvate, water dikinase]-phosphate + phosphate + H(+) = [pyruvate, water dikinase] + diphosphate. Bifunctional serine/threonine kinase and phosphorylase involved in the regulation of the phosphoenolpyruvate synthase (PEPS) by catalyzing its phosphorylation/dephosphorylation. This Burkholderia vietnamiensis (strain G4 / LMG 22486) (Burkholderia cepacia (strain R1808)) protein is Putative phosphoenolpyruvate synthase regulatory protein.